The following is a 161-amino-acid chain: Ribosome maturation factor RimP (161 aa).

It belongs to the RimP family.

The protein localises to the cytoplasm. In terms of biological role, required for maturation of 30S ribosomal subunits. The polypeptide is Ribosome maturation factor RimP (Janthinobacterium sp. (strain Marseille) (Minibacterium massiliensis)).